Here is a 397-residue protein sequence, read N- to C-terminus: Chorismate synthase (397 aa).

Positions 40 and 46 each coordinate NADP(+). Residues 129–131 (RSS), 257–258 (QA), Gly-302, 317–321 (KPISS), and Arg-343 contribute to the FMN site.

It belongs to the chorismate synthase family. Homotetramer. The cofactor is FMNH2.

The enzyme catalyses 5-O-(1-carboxyvinyl)-3-phosphoshikimate = chorismate + phosphate. It participates in metabolic intermediate biosynthesis; chorismate biosynthesis; chorismate from D-erythrose 4-phosphate and phosphoenolpyruvate: step 7/7. Catalyzes the anti-1,4-elimination of the C-3 phosphate and the C-6 proR hydrogen from 5-enolpyruvylshikimate-3-phosphate (EPSP) to yield chorismate, which is the branch point compound that serves as the starting substrate for the three terminal pathways of aromatic amino acid biosynthesis. This reaction introduces a second double bond into the aromatic ring system. This chain is Chorismate synthase, found in Chlorobium phaeovibrioides (strain DSM 265 / 1930) (Prosthecochloris vibrioformis (strain DSM 265)).